A 245-amino-acid polypeptide reads, in one-letter code: 5-oxoprolinase subunit A (245 aa).

Belongs to the LamB/PxpA family. As to quaternary structure, forms a complex composed of PxpA, PxpB and PxpC.

The enzyme catalyses 5-oxo-L-proline + ATP + 2 H2O = L-glutamate + ADP + phosphate + H(+). Functionally, catalyzes the cleavage of 5-oxoproline to form L-glutamate coupled to the hydrolysis of ATP to ADP and inorganic phosphate. In Yersinia pseudotuberculosis serotype O:1b (strain IP 31758), this protein is 5-oxoprolinase subunit A.